We begin with the raw amino-acid sequence, 614 residues long: RNA polymerase sigma factor RpoD (614 aa).

The disordered stretch occupies residues 168–245; sequence DPDDNIAAPT…PEEKRSYPQG (78 aa). The span at 193 to 209 shows a compositional bias: acidic residues; it reads EADDDEEESEGGDDEEE. Polar residues predominate over residues 215-232; the sequence is TRSSQPSVSVRYPSSFSD. The sigma-70 factor domain-2 stretch occupies residues 380 to 450; sequence MVEANLRLVI…TRSIADQART (71 aa). Residues 404 to 407 carry the Interaction with polymerase core subunit RpoC motif; the sequence is DLIQ. The tract at residues 459-535 is sigma-70 factor domain-3; that stretch reads ETINKLNRIS…DSTMQSPIYV (77 aa). The sigma-70 factor domain-4 stretch occupies residues 548–601; it reads VLSGLTAREAKVLRMRFGIDMNTDHTLEEVGKQFDVTRERIRQIEAKAWRKLRH. The segment at residues 574 to 593 is a DNA-binding region (H-T-H motif); it reads LEEVGKQFDVTRERIRQIEA.

Belongs to the sigma-70 factor family. RpoD/SigA subfamily. As to quaternary structure, interacts transiently with the RNA polymerase catalytic core.

Its subcellular location is the cytoplasm. Its function is as follows. Sigma factors are initiation factors that promote the attachment of RNA polymerase to specific initiation sites and are then released. This sigma factor is the primary sigma factor during exponential growth. The chain is RNA polymerase sigma factor RpoD from Pseudomonas putida (Arthrobacter siderocapsulatus).